The following is a 424-amino-acid chain: MSVDSMLCDRIDIAKQLIKRAEALSRSRVGGVEGGAKLCSKLRAELKFLQKVETGKVAIKESHLRSTNLTHLQAVIESAESLEEVVSVLHVFCYNDQFGEKQSLVVDVVANSGHTWVKAIGRKAEALHNIWLGRGQYGDKSIIEQAEDFLQASSQQPVQYSSPHIIFAFYNSVSKPMAEKLKEMGISVRGDIVAVNVSQENSPEENYLSGSESDCDGDDTSVLHVSKVDSENIVASIAFPTEIKVEVCKRVNLDITTLITYVSALSHGGCEWIFKEKVLTEQAAQERQEKVLPLLNSFMEAKELFACECAVKDFQSILETLGGPAEKERAASLVKRITVVPDQPSERALQLASSSKINSRSISIFGTGESLKAITMTANSGFVRAAANQGVKFSVFIHQPRALTESKESSATPLPNNYISSNQL.

The protein belongs to the UPF0415 family.

The sequence is that of UPF0415 protein C7orf25 homolog from Xenopus tropicalis (Western clawed frog).